The sequence spans 388 residues: Mannitol-1-phosphate 5-dehydrogenase (388 aa).

NAD(+) is bound at residue 4–15 (AVHFGAGNIGRG).

Belongs to the mannitol dehydrogenase family.

The catalysed reaction is D-mannitol 1-phosphate + NAD(+) = beta-D-fructose 6-phosphate + NADH + H(+). The polypeptide is Mannitol-1-phosphate 5-dehydrogenase (Lactococcus lactis subsp. cremoris (strain MG1363)).